The sequence spans 115 residues: NADH-ubiquinone oxidoreductase chain 3 (115 aa).

3 helical membrane passes run 4-24, 55-75, and 86-106; these read FIVM…AFWL, FFLV…LLPL, and ITML…AYEW.

Belongs to the complex I subunit 3 family. As to quaternary structure, core subunit of respiratory chain NADH dehydrogenase (Complex I) which is composed of 45 different subunits. Interacts with TMEM186. Interacts with TMEM242.

The protein resides in the mitochondrion inner membrane. It carries out the reaction a ubiquinone + NADH + 5 H(+)(in) = a ubiquinol + NAD(+) + 4 H(+)(out). Its function is as follows. Core subunit of the mitochondrial membrane respiratory chain NADH dehydrogenase (Complex I) which catalyzes electron transfer from NADH through the respiratory chain, using ubiquinone as an electron acceptor. Essential for the catalytic activity of complex I. The chain is NADH-ubiquinone oxidoreductase chain 3 from Reithrodontomys fulvescens (Fulvous harvest mouse).